Here is a 238-residue protein sequence, read N- to C-terminus: Urease accessory protein UreF (238 aa).

The protein belongs to the UreF family. UreD, UreF and UreG form a complex that acts as a GTP-hydrolysis-dependent molecular chaperone, activating the urease apoprotein by helping to assemble the nickel containing metallocenter of UreC. The UreE protein probably delivers the nickel.

It localises to the cytoplasm. In terms of biological role, required for maturation of urease via the functional incorporation of the urease nickel metallocenter. The chain is Urease accessory protein UreF from Delftia acidovorans (strain DSM 14801 / SPH-1).